Reading from the N-terminus, the 343-residue chain is MWHNQGDAMSLSMNLKLCNYHNCNCNIGEEYYNHTYPQFWNRIIEKYKLNKIISYDFTSLPYYRFVGMVGDFISKNITTGPCLLTPKEIRKLNPNIDFEEVKKMFLRHPTFEDYVSVAIETNKGYKNHIIIETYEYAKLVEYKTNIPFEEALKLTKLSAKNFKKYYKKKVKAKYYLTHKKSFDRRLRELCNEHYKYYLENANISKKGKEIIKNNPEESTWLRIKVSFLPEAINKDDSTIVEPVSSIEGMLLANKISEVSGIVVRSPPTLNLKPIMNEGNENEIFYLNNDIEKEIKKLTYRTRTKWGCSLYHNLLFLNSPICCNKNCEECLEIFINKIKILKMG.

This is an uncharacterized protein from Methanocaldococcus jannaschii (strain ATCC 43067 / DSM 2661 / JAL-1 / JCM 10045 / NBRC 100440) (Methanococcus jannaschii).